The primary structure comprises 217 residues: MKFFVDSANCEDIQELQNLGLVDGVTTNPSLILQSGRNILDVIQEICSLVEGPVSAEVAATDFDTMMKEAAVLAKIANNICIKLPITLDGLKACKALSEQELKTNLTLCFSATQALLAAKAGATFVSPFIGRIDDCGTNGIDLLHEIRTIYDNYGFATQILAASIRTTTHVKEAALSGADVATVPPKVLKSLAAHPLTDKGLQTFLTDWAKTGQKIA.

Residue lysine 83 is the Schiff-base intermediate with substrate of the active site.

Belongs to the transaldolase family. Type 3B subfamily.

The protein localises to the cytoplasm. The enzyme catalyses D-sedoheptulose 7-phosphate + D-glyceraldehyde 3-phosphate = D-erythrose 4-phosphate + beta-D-fructose 6-phosphate. Its pathway is carbohydrate degradation; pentose phosphate pathway; D-glyceraldehyde 3-phosphate and beta-D-fructose 6-phosphate from D-ribose 5-phosphate and D-xylulose 5-phosphate (non-oxidative stage): step 2/3. In terms of biological role, transaldolase is important for the balance of metabolites in the pentose-phosphate pathway. In Bartonella bacilliformis (strain ATCC 35685 / KC583 / Herrer 020/F12,63), this protein is Probable transaldolase.